Reading from the N-terminus, the 141-residue chain is Protein KRTCAP2 homolog (141 aa).

The next 4 helical transmembrane spans lie at Val11–Cys31, Val42–Asn62, Ala74–Val94, and Val97–Ser117.

It belongs to the KRTCAP2 family. As to quaternary structure, component of the oligosaccharyltransferase (OST) complex.

It is found in the membrane. Functionally, subunit of the oligosaccharyl transferase (OST) complex that catalyzes the initial transfer of a defined glycan (Glc(3)Man(9)GlcNAc(2) in eukaryotes) from the lipid carrier dolichol-pyrophosphate to an asparagine residue within an Asn-X-Ser/Thr consensus motif in nascent polypeptide chains, the first step in protein N-glycosylation. N-glycosylation occurs cotranslationally and the complex associates with the Sec61 complex at the channel-forming translocon complex that mediates protein translocation across the endoplasmic reticulum (ER). All subunits are required for a maximal enzyme activity. The polypeptide is Protein KRTCAP2 homolog (Drosophila melanogaster (Fruit fly)).